The primary structure comprises 478 residues: 5-hydroxytryptamine receptor 3A (478 aa).

The N-terminal stretch at 1–23 is a signal peptide; that stretch reads MLLWVQQALLALLLPTLLAQGEA. The Extracellular portion of the chain corresponds to 24–241; it reads RRSRNTTRPA…MKFYVVIRRR (218 aa). N-linked (GlcNAc...) asparagine glycosylation is found at Asn28, Asn104, Asn170, and Asn186. The cysteines at positions 157 and 171 are disulfide-linked. Residues 242–268 traverse the membrane as a helical segment; the sequence is PLFYVVSLLLPSIFLMVMDIVGFYLPP. At 269 to 273 the chain is on the cytoplasmic side; sequence NSGER. Residues 274–292 traverse the membrane as a helical segment; sequence VSFKITLLLGYSVFLIIVS. Over 293-302 the chain is Extracellular; that stretch reads DTLPATAIGT. Residues 303 to 321 form a helical membrane-spanning segment; sequence PLIGVYFVVCMALLVISLA. The Cytoplasmic segment spans residues 322–455; the sequence is ETIFIVRLVH…GSVLDKLLFH (134 aa). The tract at residues 389–408 is disordered; that stretch reads GGPQDFEKSPRDRCSPPPPP. Residues 393-402 show a composition bias toward basic and acidic residues; sequence DFEKSPRDRC. The segment at 414–450 is HA-stretch; determines single-channel conductance in 5-HT3 receptors; sequence AVCGLLQELSSIRQFLEKRDEIREVARDWLRVGSVLD. Residues 456 to 475 traverse the membrane as a helical segment; the sequence is IYLLAVLAYSITLVMLWSIW. The Extracellular segment spans residues 476–478; that stretch reads QYA.

Belongs to the ligand-gated ion channel (TC 1.A.9) family. 5-hydroxytryptamine receptor (TC 1.A.9.2) subfamily. HTR3A sub-subfamily. Forms homopentameric as well as heteropentameric serotonin-activated cation-selective channel complexes with HTR3B or HTR3C or HTR3D or HTR3E. The homomeric complex is functional but exhibits low conductance with modified voltage dependence, and decreased agonist and antagonist affinity. Heteropentameric complexes display properties which resemble that of neuronal serotonin-activated channels in vivo. Interacts with RIC3. In terms of tissue distribution, expressed in cerebral cortex, amygdala, hippocampus, and testis. Detected in monocytes of the spleen and tonsil, in small and large intestine, uterus, prostate, ovary and placenta.

Its subcellular location is the postsynaptic cell membrane. It is found in the cell membrane. It carries out the reaction Na(+)(in) = Na(+)(out). The catalysed reaction is K(+)(in) = K(+)(out). The enzyme catalyses Ca(2+)(in) = Ca(2+)(out). It catalyses the reaction Mg(2+)(in) = Mg(2+)(out). Functionally, forms serotonin (5-hydroxytryptamine/5-HT3)-activated cation-selective channel complexes, which when activated cause fast, depolarizing responses in neurons. The sequence is that of 5-hydroxytryptamine receptor 3A from Homo sapiens (Human).